A 281-amino-acid chain; its full sequence is L-cysteine S-thiosulfotransferase subunit SoxA (281 aa).

A signal peptide spans 1–25 (MTKHGFLLATLVLAGATLPIGPVTA). C99 and C130 are disulfide-bonded. Residues 175–281 (AAYEQGKRFY…LELNGPGARK (107 aa)) form the Cytochrome c domain. C195 and H199 together coordinate heme. R238 is a binding site for substrate. C242 contacts heme. Catalysis depends on C242, which acts as the Cysteine persulfide intermediate.

The protein belongs to the SoxA family. As to quaternary structure, heterodimer of SoxA and SoxX. It depends on heme as a cofactor. Post-translationally, cysteine persulfide at Cys-242.

The protein localises to the periplasm. It carries out the reaction L-cysteinyl-[SoxY protein] + thiosulfate + 2 Fe(III)-[cytochrome c] = S-sulfosulfanyl-L-cysteinyl-[SoxY protein] + 2 Fe(II)-[cytochrome c] + 2 H(+). It catalyses the reaction S-sulfanyl-L-cysteinyl-[SoxY protein] + thiosulfate + 2 Fe(III)-[cytochrome c] = S-(2-sulfodisulfanyl)-L-cysteinyl-[SoxY protein] + 2 Fe(II)-[cytochrome c] + 2 H(+). In terms of biological role, C-type monoheme cytochrome, which is part of the SoxAX cytochrome complex involved in sulfur oxidation. The SoxAX complex catalyzes the formation of a heterodisulfide bond between the conserved cysteine residue on a sulfur carrier SoxYZ complex subunit SoxY and thiosulfate or other inorganic sulfur substrates. This leads to the intermediary formation of conspicuous sulfur globules inside of the cells. The chain is L-cysteine S-thiosulfotransferase subunit SoxA from Allochromatium vinosum (Chromatium vinosum).